The chain runs to 147 residues: Sentan (147 aa).

Residues 1-32 (MGGCMHSTQDKSLHLEGDPNPSAAPTSTCAPR) form a disordered region. Basic and acidic residues predominate over residues 8-17 (TQDKSLHLEG).

Belongs to the S-100 family.

Its subcellular location is the cell projection. The protein localises to the cilium. In terms of biological role, may be a component of the linker structure that bridges the ciliary membrane and peripheral singlet microtubules. This Homo sapiens (Human) protein is Sentan (SNTN).